A 405-amino-acid polypeptide reads, in one-letter code: Glyceraldehyde-3-phosphate dehydrogenase A, chloroplastic (405 aa).

A chloroplast-targeting transit peptide spans 1–68 (MASATFSVAK…GHKKSLVVEA (68 aa)). Residues 80 to 81 (RI), aspartate 104, and arginine 149 contribute to the NADP(+) site. Residues 221-223 (SCT), threonine 252, arginine 267, 280-281 (TG), and arginine 303 contribute to the D-glyceraldehyde 3-phosphate site. Cysteine 222 (nucleophile) is an active-site residue. Residue asparagine 385 coordinates NADP(+).

It belongs to the glyceraldehyde-3-phosphate dehydrogenase family. In terms of assembly, tetramer of either four A chains (GAPDH 2) or two A and two B chains (GAPDH 1).

The protein resides in the plastid. The protein localises to the chloroplast. It catalyses the reaction D-glyceraldehyde 3-phosphate + phosphate + NADP(+) = (2R)-3-phospho-glyceroyl phosphate + NADPH + H(+). It functions in the pathway carbohydrate biosynthesis; Calvin cycle. The protein is Glyceraldehyde-3-phosphate dehydrogenase A, chloroplastic (GAPA) of Pisum sativum (Garden pea).